A 442-amino-acid polypeptide reads, in one-letter code: UDP-N-acetylglucosamine 1-carboxyvinyltransferase (442 aa).

A phosphoenolpyruvate-binding site is contributed by 22–23 (KN). Arg94 is a binding site for UDP-N-acetyl-alpha-D-glucosamine. The Proton donor role is filled by Asp119. Residues Asp309 and Val331 each coordinate UDP-N-acetyl-alpha-D-glucosamine.

This sequence belongs to the EPSP synthase family. MurA subfamily.

The protein resides in the cytoplasm. It catalyses the reaction phosphoenolpyruvate + UDP-N-acetyl-alpha-D-glucosamine = UDP-N-acetyl-3-O-(1-carboxyvinyl)-alpha-D-glucosamine + phosphate. It functions in the pathway cell wall biogenesis; peptidoglycan biosynthesis. Cell wall formation. Adds enolpyruvyl to UDP-N-acetylglucosamine. In Chlamydia muridarum (strain MoPn / Nigg), this protein is UDP-N-acetylglucosamine 1-carboxyvinyltransferase.